We begin with the raw amino-acid sequence, 230 residues long: Large ribosomal subunit protein uL1 (230 aa).

This sequence belongs to the universal ribosomal protein uL1 family. Part of the 50S ribosomal subunit.

In terms of biological role, binds directly to 23S rRNA. The L1 stalk is quite mobile in the ribosome, and is involved in E site tRNA release. Protein L1 is also a translational repressor protein, it controls the translation of the L11 operon by binding to its mRNA. This is Large ribosomal subunit protein uL1 from Staphylococcus aureus (strain N315).